The sequence spans 633 residues: Shootin-1 (633 aa).

An N-acetylmethionine modification is found at Met-1. Ser-3 and Ser-4 each carry phosphoserine. Residues 7 to 353 (EKQLQLITSL…RVNQSENSVP (347 aa)) are a coiled coil. Phosphoserine; by PAK1 occurs at positions 101 and 249. Residues 343-508 (KRVNQSENSV…LATSESKSMP (166 aa)) are disordered. The segment covering 352–369 (VPPPPPPPPPLPPPPPNP) has biased composition (pro residues). Phosphoserine is present on Ser-375. The span at 403–418 (TDLKRQAVEEMMDRIK) shows a compositional bias: basic and acidic residues. Over residues 456-465 (LNKSTSSRSL) the composition is skewed to polar residues. Ser-473 carries the phosphoserine modification. Position 487 is a phosphothreonine (Thr-487). Over residues 490 to 505 (ADSSSPTGILATSESK) the composition is skewed to polar residues. Ser-494 carries the post-translational modification Phosphoserine. Phosphothreonine is present on Thr-496. Ser-506 and Ser-515 each carry phosphoserine. The interval 525–633 (TLEAEFNNPC…KTGETDSSNC (109 aa)) is disordered. Position 537 is a phosphothreonine (Thr-537). The segment covering 550–559 (CTNSKVTFQP) has biased composition (polar residues). A compositionally biased stretch (basic and acidic residues) spans 590-621 (PQTKDQAAEKDPTQCKEEERGETQPEFKEDSS).

Belongs to the shootin family. As to quaternary structure, interacts with PFN2. Interacts (via N-terminus) with KIF20B; this interaction is direct and promotes the association of SHTN1 to microtubules in primary neurons. Associates with microtubule. Interacts with L1CAM; this interaction occurs in axonal growth cones. Interacts with actin filament retrograde flow; this interaction is enhanced in a netrin-1- and PAK1-dependent manner and promotes F-actin-substrate coupling and concomitant formation of traction forces at axonal growth cones. Interacts with RUFY3. Phosphorylated on Ser-101 and Ser-249 by PAK1 through a CDC42- and RAC1-dependent signaling pathway, which enhances its association with F-actin retrograde flow in filopodia and lamellipodia of axonal growth cones. Phosphorylation on Ser-101 and Ser-249 is increased by netrin-1. Brain-specific (at protein level). Expressed in hippocampal neurons.

It is found in the perikaryon. The protein resides in the cell projection. Its subcellular location is the axon. The protein localises to the growth cone. It localises to the cytoplasm. It is found in the cytoskeleton. The protein resides in the filopodium. Its subcellular location is the lamellipodium. In terms of biological role, involved in the generation of internal asymmetric signals required for neuronal polarization and neurite outgrowth. Mediates netrin-1-induced F-actin-substrate coupling or 'clutch engagement' within the axon growth cone through activation of CDC42, RAC1 and PAK1-dependent signaling pathway, thereby converting the F-actin retrograde flow into traction forces, concomitantly with filopodium extension and axon outgrowth. Plays a role in cytoskeletal organization by regulating the subcellular localization of phosphoinositide 3-kinase (PI3K) activity at the axonal growth cone. Also plays a role in regenerative neurite outgrowth. In the developing cortex, cooperates with KIF20B to promote both the transition from the multipolar to the bipolar stage and the radial migration of cortical neurons from the ventricular zone toward the superficial layer of the neocortex. Involved in the accumulation of phosphatidylinositol 3,4,5-trisphosphate (PIP3) in the growth cone of primary hippocampal neurons. The protein is Shootin-1 of Rattus norvegicus (Rat).